The primary structure comprises 378 residues: MTYPARAVVDLGAIAGNVARLREVAGPAEVMAVVKGDAYGHGLVPVARAALGAGATWLGVAQLGEALTLRAAGVDARTLTWLYAPGAPLAEALRADLDLSVAAPWALDEVVGAARESGVVARVHLKVDTGMGRSGLFLDEWGGLLDAAVRAQAAGEIDVVGVWSHLASADDAESGLTAEQTRVFAEAVRRAEDAGAHLEVRHLANSAGTLAHAATHFDLVRPGIAVVGLSPFGDRTADELGLTPAMRLEAELTIVKHAPAGQGVSYGHEYTTSEATSLAVVPLGYADGIPRHAGGAGPVQVGDTWSRIAGRVCMDQFVLDLGAGANAHAGDVAVLFGSGADGEPTAADWARAADTITYEIVTRLGPRVPRVHVGGRDA.

Catalysis depends on Lys35, which acts as the Proton acceptor; specific for D-alanine. Lys35 is subject to N6-(pyridoxal phosphate)lysine. Substrate is bound at residue Arg133. The active-site Proton acceptor; specific for L-alanine is the Tyr266. Met314 contributes to the substrate binding site.

The protein belongs to the alanine racemase family. Pyridoxal 5'-phosphate is required as a cofactor.

The catalysed reaction is L-alanine = D-alanine. It functions in the pathway amino-acid biosynthesis; D-alanine biosynthesis; D-alanine from L-alanine: step 1/1. Functionally, catalyzes the interconversion of L-alanine and D-alanine. May also act on other amino acids. This is Alanine racemase (alr) from Beutenbergia cavernae (strain ATCC BAA-8 / DSM 12333 / CCUG 43141 / JCM 11478 / NBRC 16432 / NCIMB 13614 / HKI 0122).